The chain runs to 362 residues: Peptide chain release factor 1 (362 aa).

N5-methylglutamine is present on Q235.

It belongs to the prokaryotic/mitochondrial release factor family. In terms of processing, methylated by PrmC. Methylation increases the termination efficiency of RF1.

Its subcellular location is the cytoplasm. Peptide chain release factor 1 directs the termination of translation in response to the peptide chain termination codons UAG and UAA. The sequence is that of Peptide chain release factor 1 from Acinetobacter baumannii (strain AYE).